The following is a 534-amino-acid chain: GMP synthase [glutamine-hydrolyzing] (534 aa).

Residues 4–202 (KILILDFGSQ…VLEIAKAQPD (199 aa)) enclose the Glutamine amidotransferase type-1 domain. C81 functions as the Nucleophile in the catalytic mechanism. Active-site residues include H176 and E178. Positions 203–402 (WVMKDHVAEA…LGLPHDMVYR (200 aa)) constitute a GMPS ATP-PPase domain. 230–236 (SGGVDSS) is a binding site for ATP.

As to quaternary structure, homodimer.

The catalysed reaction is XMP + L-glutamine + ATP + H2O = GMP + L-glutamate + AMP + diphosphate + 2 H(+). It participates in purine metabolism; GMP biosynthesis; GMP from XMP (L-Gln route): step 1/1. Catalyzes the synthesis of GMP from XMP. This chain is GMP synthase [glutamine-hydrolyzing], found in Methylibium petroleiphilum (strain ATCC BAA-1232 / LMG 22953 / PM1).